The primary structure comprises 569 residues: Arginine--tRNA ligase (569 aa).

A 'HIGH' region motif is present at residues alanine 128–histidine 138.

Belongs to the class-I aminoacyl-tRNA synthetase family. In terms of assembly, monomer.

Its subcellular location is the cytoplasm. The catalysed reaction is tRNA(Arg) + L-arginine + ATP = L-arginyl-tRNA(Arg) + AMP + diphosphate. The chain is Arginine--tRNA ligase from Paracidovorax citrulli (strain AAC00-1) (Acidovorax citrulli).